The following is an 875-amino-acid chain: Serine/threonine-protein kinase D2 (875 aa).

Residues Met-1 to Pro-12 are compositionally biased toward low complexity. The disordered stretch occupies residues Met-1–Leu-35. The segment covering Ser-14 to Leu-35 has biased composition (pro residues). Ser-30 carries the post-translational modification Phosphoserine. Tyr-87 carries the phosphotyrosine modification. The Phorbol-ester/DAG-type 1 zinc finger occupies Pro-138–Cys-188. 8 positions are modified to phosphoserine: Ser-197, Ser-198, Ser-200, Ser-203, Ser-206, Ser-211, Ser-212, and Ser-214. The segment at Arg-224 to Tyr-247 is disordered. Residues Ser-236–Ser-245 show a composition bias toward low complexity. Ser-244 is modified (phosphoserine; by CSNK1D and CSNK1E). Ser-245 is modified (phosphoserine). A Phorbol-ester/DAG-type 2 zinc finger spans residues Pro-265–Cys-315. Residues Asp-332–Gln-374 form a disordered region. The 113-residue stretch at Thr-398–Met-510 folds into the PH domain. Tyr-408 bears the Phosphotyrosine mark. Phosphotyrosine; by ABL1 is present on Tyr-439. Ser-519 carries the phosphoserine modification. Positions Ile-552–Leu-808 constitute a Protein kinase domain. ATP-binding positions include Leu-558–Val-566 and Lys-581. The Proton acceptor role is filled by Asp-675. Ser-707 is modified (phosphoserine; by PKC). Phosphoserine; by autocatalysis is present on Ser-711. Residue Tyr-718 is modified to Phosphotyrosine; by ABL1. The Important for ABL1-mediated Tyr-718 phosphorylation motif lies at Leu-725–Gln-727. At Ser-873 the chain carries Phosphoserine; by autocatalysis.

The protein belongs to the protein kinase superfamily. CAMK Ser/Thr protein kinase family. PKD subfamily. Interacts (via C-terminus) with LCK. Interacts (via N-terminus and zing-finger domain 1 and 2) with PRKCD in response to oxidative stress; the interaction is independent of PRKD2 tyrosine phosphorylation. Requires Mg(2+) as cofactor. Post-translationally, phosphorylation of Ser-873 correlates with the activation status of the kinase. Ser-707 is probably phosphorylated by PKC. Phosphorylation at Ser-244 by CSNK1D and CSNK1E promotes nuclear localization and substrate targeting. Phosphorylation at Ser-244, Ser-707 and Ser-711 is required for nuclear localization. Phosphorylated at Tyr-438 by ABL1 in response to oxidative stress. Phosphorylated at Tyr-718 by ABL1 specifically in response to oxidative stress; requires prior phosphorylation at Ser-707 or/and Ser-711.

Its subcellular location is the cytoplasm. The protein localises to the cell membrane. The protein resides in the golgi apparatus. It localises to the trans-Golgi network. It carries out the reaction L-seryl-[protein] + ATP = O-phospho-L-seryl-[protein] + ADP + H(+). The catalysed reaction is L-threonyl-[protein] + ATP = O-phospho-L-threonyl-[protein] + ADP + H(+). Its activity is regulated as follows. Activated by DAG and phorbol esters. Phorbol-ester/DAG-type domains bind DAG, mediating translocation to membranes. Autophosphorylation of Ser-711 and phosphorylation of Ser-707 by PKC relieves auto-inhibition by the PH domain. Catalytic activity is further increased by phosphorylation at Tyr-718 in response to oxidative stress. In terms of biological role, serine/threonine-protein kinase that converts transient diacylglycerol (DAG) signals into prolonged physiological effects downstream of PKC, and is involved in the regulation of cell proliferation via MAPK1/3 (ERK1/2) signaling, oxidative stress-induced NF-kappa-B activation, inhibition of HDAC7 transcriptional repression, signaling downstream of T-cell antigen receptor (TCR) and cytokine production, and plays a role in Golgi membrane trafficking, angiogenesis, secretory granule release and cell adhesion. May potentiate mitogenesis induced by the neuropeptide bombesin by mediating an increase in the duration of MAPK1/3 (ERK1/2) signaling, which leads to accumulation of immediate-early gene products including FOS that stimulate cell cycle progression. In response to oxidative stress, is phosphorylated at Tyr-438 and Tyr-718 by ABL1, which leads to the activation of PRKD2 without increasing its catalytic activity, and mediates activation of NF-kappa-B. In response to the activation of the gastrin receptor CCKBR, is phosphorylated at Ser-244 by CSNK1D and CSNK1E, translocates to the nucleus, phosphorylates HDAC7, leading to nuclear export of HDAC7 and inhibition of HDAC7 transcriptional repression of NR4A1/NUR77. Upon TCR stimulation, is activated independently of ZAP70, translocates from the cytoplasm to the nucleus and is required for interleukin-2 (IL2) promoter up-regulation. During adaptive immune responses, is required in peripheral T-lymphocytes for the production of the effector cytokines IL2 and IFNG after TCR engagement and for optimal induction of antibody responses to antigens. In epithelial cells stimulated with lysophosphatidic acid (LPA), is activated through a PKC-dependent pathway and mediates LPA-stimulated interleukin-8 (IL8) secretion via a NF-kappa-B-dependent pathway. During TCR-induced T-cell activation, interacts with and is activated by the tyrosine kinase LCK, which results in the activation of the NFAT transcription factors. In the trans-Golgi network (TGN), regulates the fission of transport vesicles that are on their way to the plasma membrane and in polarized cells is involved in the transport of proteins from the TGN to the basolateral membrane. Plays an important role in endothelial cell proliferation and migration prior to angiogenesis, partly through modulation of the expression of KDR/VEGFR2 and FGFR1, two key growth factor receptors involved in angiogenesis. In secretory pathway, is required for the release of chromogranin-A (CHGA)-containing secretory granules from the TGN. Downstream of PRKCA, plays important roles in angiotensin-2-induced monocyte adhesion to endothelial cells. This chain is Serine/threonine-protein kinase D2 (Prkd2), found in Mus musculus (Mouse).